A 332-amino-acid polypeptide reads, in one-letter code: Leucine carboxyl methyltransferase 1 (332 aa).

The segment at 1–23 is disordered; that stretch reads MAASLRRPSFTTCSSPTDTDDEG. S-adenosyl-L-methionine-binding positions include Arg-71, Gly-96, Asp-120, 169-170, and Glu-196; that span reads DL.

It belongs to the methyltransferase superfamily. LCMT family.

The catalysed reaction is [phosphatase 2A protein]-C-terminal L-leucine + S-adenosyl-L-methionine = [phosphatase 2A protein]-C-terminal L-leucine methyl ester + S-adenosyl-L-homocysteine. Functionally, methylates the carboxyl group of the C-terminal leucine residue of protein phosphatase 2A catalytic subunits to form alpha-leucine ester residues. In Bos taurus (Bovine), this protein is Leucine carboxyl methyltransferase 1 (LCMT1).